We begin with the raw amino-acid sequence, 103 residues long: Large ribosomal subunit protein uL24 (103 aa).

It belongs to the universal ribosomal protein uL24 family. As to quaternary structure, part of the 50S ribosomal subunit.

Its function is as follows. One of two assembly initiator proteins, it binds directly to the 5'-end of the 23S rRNA, where it nucleates assembly of the 50S subunit. Functionally, one of the proteins that surrounds the polypeptide exit tunnel on the outside of the subunit. In Bacillus anthracis (strain A0248), this protein is Large ribosomal subunit protein uL24.